Here is a 164-residue protein sequence, read N- to C-terminus: Hydrogenase 2 maturation protease (164 aa).

Ni(2+)-binding residues include glutamate 16, aspartate 62, and histidine 93.

The protein belongs to the peptidase A31 family. It depends on Ni(2+) as a cofactor.

In terms of biological role, protease involved in the C-terminal processing of HybC, the large subunit of hydrogenase 2. Specifically cleaves off a 15 amino acid peptide from the C-terminus of the precursor of HybC. The polypeptide is Hydrogenase 2 maturation protease (hybD) (Escherichia coli (strain K12)).